A 211-amino-acid polypeptide reads, in one-letter code: Endo-1,4-beta-xylanase A (211 aa).

A signal peptide spans 1–27; sequence MKVTAAFAGLLVTAFAAPVPEPVLVSR. Residues 28-210 enclose the GH11 domain; the sequence is SAGINYVQNY…GAGSASVTIS (183 aa). E106 functions as the Nucleophile in the catalytic mechanism. Residues C119 and C138 are joined by a disulfide bond. The Proton donor role is filled by E197.

Belongs to the glycosyl hydrolase 11 (cellulase G) family.

Its subcellular location is the secreted. The catalysed reaction is Endohydrolysis of (1-&gt;4)-beta-D-xylosidic linkages in xylans.. The protein operates within glycan degradation; xylan degradation. In terms of biological role, endo-1,4-beta-xylanase involved in the hydrolysis of xylan, a major structural heterogeneous polysaccharide found in plant biomass representing the second most abundant polysaccharide in the biosphere, after cellulose. The sequence is that of Endo-1,4-beta-xylanase A (xynA) from Aspergillus niger.